Reading from the N-terminus, the 389-residue chain is MSEQFKDNFWGPNGFETIEKRMNQGTESTRLFLLFLKERAAIEENYSKSLQKLLKSTSQLIEYGTLRDAWYGVRGEAESLVRVHHELGQKIEKDIVAPFSKFKSEQKKVKKNFLYDAYKLNKERKDMESSITKTRAKYDDYSKQAETIAITMETAKNTKTAAEVGKIQSKLQKIQRDASSAEQDYRDSVNKLSMYQPTWEDKVSSNYHTLQLTEEERIDYIKVQLEKYVGAIKSTVPDTETTNRNLVNVITQIDKLEDIHCFVRESRTGTEKPPPPQFISFGGKSSSDYIQNKASYSAPLTSSVSSNSLTSSYNSATTTPTPAPRSTPINLSKKKQAKALYDYVGSDATELDFFAGDIITILDEDESGWFRGELGDRIGLYPSNYCEPI.

An F-BAR domain is found at 3–258 (EQFKDNFWGP…VITQIDKLED (256 aa)). Positions 119-192 (KLNKERKDME…QDYRDSVNKL (74 aa)) form a coiled coil. A compositionally biased stretch (low complexity) spans 300 to 328 (LTSSVSSNSLTSSYNSATTTPTPAPRSTP). The tract at residues 300–329 (LTSSVSSNSLTSSYNSATTTPTPAPRSTPI) is disordered. The SH3 domain occupies 332-389 (SKKKQAKALYDYVGSDATELDFFAGDIITILDEDESGWFRGELGDRIGLYPSNYCEPI).

This Dictyostelium discoideum (Social amoeba) protein is SH3 and F-BAR domain-containing protein DDB_G0274695.